The chain runs to 521 residues: Cytoplasmic polyadenylation element-binding protein 2 (521 aa).

Residues Met1–Ala11 show a composition bias toward pro residues. Disordered stretches follow at residues Met1–Ala35 and Pro50–Ile88. Low complexity predominate over residues Ala12–Ala35. Phosphoserine is present on Ser21. Residues Ser55–Met70 show a composition bias toward polar residues. RRM domains follow at residues Arg264–Leu355 and Lys372–Leu454.

The protein belongs to the RRM CPEB family. As to quaternary structure, interacts with TENT2/GLD2. As to expression, expressed in embryo, cerebellum, salivary gland, thymus, heart, liver, lung, spleen, kidney, intestine, ovary and round spermatids. Weakly expressed in granular cells of dentate gyrus and the pyramidal cells of CA3 and CA1 of the hippocampus.

The protein localises to the cytoplasm. Its function is as follows. May play a role in translational regulation of stored mRNAs in transcriptionally inactive haploid spermatids. Binds to poly(U) RNA oligomers. Required for cell cycle progression, specifically for the transition from metaphase to anaphase. The chain is Cytoplasmic polyadenylation element-binding protein 2 (Cpeb2) from Mus musculus (Mouse).